The following is an 866-amino-acid chain: DNA topoisomerase 3-beta (866 aa).

Residues T4–V149 enclose the Toprim domain. Residues E10, D114, and D116 each coordinate Mg(2+). Positions S165–Y585 constitute a Topo IA-type catalytic domain. Positions S207 to Q212 are interaction with DNA. Y329 (O-(5'-phospho-DNA)-tyrosine intermediate) is an active-site residue. Residues M830–S853 are compositionally biased toward basic residues. Residues M830–F866 are disordered. Residues S854 to F866 show a composition bias toward basic and acidic residues.

This sequence belongs to the type IA topoisomerase family. Mg(2+) serves as cofactor.

It carries out the reaction ATP-independent breakage of single-stranded DNA, followed by passage and rejoining.. Releases the supercoiling and torsional tension of DNA introduced during the DNA replication and transcription by transiently cleaving and rejoining one strand of the DNA duplex. Introduces a single-strand break via transesterification at a target site in duplex DNA. The scissile phosphodiester is attacked by the catalytic tyrosine of the enzyme, resulting in the formation of a DNA-(5'-phosphotyrosyl)-enzyme intermediate and the expulsion of a 3'-OH DNA strand. The free DNA strand than undergoes passage around the unbroken strand thus removing DNA supercoils. Finally, in the religation step, the DNA 3'-OH attacks the covalent intermediate to expel the active-site tyrosine and restore the DNA phosphodiester backbone. This Oryza sativa subsp. japonica (Rice) protein is DNA topoisomerase 3-beta (TOP3B).